Consider the following 369-residue polypeptide: Anhydro-N-acetylmuramic acid kinase (369 aa).

12 to 19 (GTSLDGVD) provides a ligand contact to ATP.

This sequence belongs to the anhydro-N-acetylmuramic acid kinase family.

The catalysed reaction is 1,6-anhydro-N-acetyl-beta-muramate + ATP + H2O = N-acetyl-D-muramate 6-phosphate + ADP + H(+). It participates in amino-sugar metabolism; 1,6-anhydro-N-acetylmuramate degradation. It functions in the pathway cell wall biogenesis; peptidoglycan recycling. Functionally, catalyzes the specific phosphorylation of 1,6-anhydro-N-acetylmuramic acid (anhMurNAc) with the simultaneous cleavage of the 1,6-anhydro ring, generating MurNAc-6-P. Is required for the utilization of anhMurNAc either imported from the medium or derived from its own cell wall murein, and thus plays a role in cell wall recycling. This Actinobacillus pleuropneumoniae serotype 7 (strain AP76) protein is Anhydro-N-acetylmuramic acid kinase.